A 97-amino-acid polypeptide reads, in one-letter code: Co-chaperonin GroES (97 aa).

It belongs to the GroES chaperonin family. Heptamer of 7 subunits arranged in a ring. Interacts with the chaperonin GroEL.

The protein resides in the cytoplasm. Functionally, together with the chaperonin GroEL, plays an essential role in assisting protein folding. The GroEL-GroES system forms a nano-cage that allows encapsulation of the non-native substrate proteins and provides a physical environment optimized to promote and accelerate protein folding. GroES binds to the apical surface of the GroEL ring, thereby capping the opening of the GroEL channel. This chain is Co-chaperonin GroES, found in Buchnera aphidicola subsp. Geoica urticularia.